The sequence spans 128 residues: Small ribosomal subunit protein uS9 (128 aa).

The tract at residues 105-128 is disordered; sequence DPRSVERKKPGQPKARRRFQFSKR. Positions 114–128 are enriched in basic residues; sequence PGQPKARRRFQFSKR.

The protein belongs to the universal ribosomal protein uS9 family.

The chain is Small ribosomal subunit protein uS9 from Bacteroides thetaiotaomicron (strain ATCC 29148 / DSM 2079 / JCM 5827 / CCUG 10774 / NCTC 10582 / VPI-5482 / E50).